Here is a 941-residue protein sequence, read N- to C-terminus: UvrABC system protein A (941 aa).

Position 37-44 (37-44) interacts with ATP; the sequence is GLSGSGKS. The C4-type zinc-finger motif lies at 260-287; the sequence is CFKCKMSFEELEPLSFSFNSPKGACESC. ABC transporter domains are found at residues 316–585 and 605–937; these read IFGY…NNHS and KEKH…KFLA. Residue 637–644 participates in ATP binding; that stretch reads GVSGSGKS. The segment at 737–763 adopts a C4-type zinc-finger fold; it reads CEKCQGDGDIKIEMHFLPDVLVQCDSC.

Belongs to the ABC transporter superfamily. UvrA family. In terms of assembly, forms a heterotetramer with UvrB during the search for lesions.

It localises to the cytoplasm. Its function is as follows. The UvrABC repair system catalyzes the recognition and processing of DNA lesions. UvrA is an ATPase and a DNA-binding protein. A damage recognition complex composed of 2 UvrA and 2 UvrB subunits scans DNA for abnormalities. When the presence of a lesion has been verified by UvrB, the UvrA molecules dissociate. The chain is UvrABC system protein A from Helicobacter pylori (strain J99 / ATCC 700824) (Campylobacter pylori J99).